Here is a 123-residue protein sequence, read N- to C-terminus: Mediator of RNA polymerase II transcription subunit 9 (123 aa).

A coiled-coil region spans residues 95-123 (WQLHIQEKKIELEKKTKHLQRLRESIQKQ).

It belongs to the Mediator complex subunit 9 family. In terms of assembly, component of the Mediator complex.

The protein resides in the nucleus. Component of the Mediator complex, a coactivator involved in the regulated transcription of nearly all RNA polymerase II-dependent genes. Mediator functions as a bridge to convey information from gene-specific regulatory proteins to the basal RNA polymerase II transcription machinery. Mediator is recruited to promoters by direct interactions with regulatory proteins and serves as a scaffold for the assembly of a functional preinitiation complex with RNA polymerase II and the general transcription factors. This chain is Mediator of RNA polymerase II transcription subunit 9 (CSE2), found in Kluyveromyces lactis (strain ATCC 8585 / CBS 2359 / DSM 70799 / NBRC 1267 / NRRL Y-1140 / WM37) (Yeast).